The following is a 207-amino-acid chain: GTP-binding protein RHO1 (207 aa).

Residue 18–25 (GDGACGKT) coordinates GTP. The short motif at 40–48 (YVPTVFDNY) is the Effector region element. Residues 65–69 (DTAGQ) and 123–126 (CKAD) each bind GTP. The disordered stretch occupies residues 187 to 207 (GKQGKSKAKSDKKKKKKCVVL). Residues 190-207 (GKSKAKSDKKKKKKCVVL) are compositionally biased toward basic residues. Cys-204 bears the Cysteine methyl ester mark. Cys-204 is lipidated: S-geranylgeranyl cysteine. A propeptide spans 205–207 (VVL) (removed in mature form).

The protein belongs to the small GTPase superfamily. Rho family.

The protein resides in the cell membrane. Its function is as follows. Involved in the regulation of actin polarization. Rho proteins are required for distinct steps during polarized hyphal growth of A.gossypii. The sequence is that of GTP-binding protein RHO1 (RHO1) from Eremothecium gossypii (strain ATCC 10895 / CBS 109.51 / FGSC 9923 / NRRL Y-1056) (Yeast).